The chain runs to 331 residues: (E)-beta farnesene synthase MBR_03882 (331 aa).

This sequence belongs to the trichodiene synthase family.

The enzyme catalyses (2E,6E)-farnesyl diphosphate = (E)-beta-farnesene + diphosphate. Its function is as follows. Terpene synthase that catalyzes the conversion of (2E,6E)-farnesyl diphosphate (FPP) into the volatile sesquiterpene (E)-beta-farnesene. This Metarhizium brunneum (strain ARSEF 3297) protein is (E)-beta farnesene synthase MBR_03882.